A 217-amino-acid chain; its full sequence is MTAPLTLALSKGRIFEETLPLLAAAGVQVAEDPETSRKLILPTTDPNLRVIIVRASDVPTYVEYGAADFGVAGKDVLVEHGGSGLYQPIDLNIARCRMSVAVPAGFDYANAVRQGARLRVATKYVETAREHFAAKGVHVDLIKLYGSMELAPLVGLADAIVDLVSSGGTLKANNLVEVEEIMAISSRLVVNQAALKLKRAALKPFLDAFERASQNGV.

It belongs to the ATP phosphoribosyltransferase family. Short subfamily. Heteromultimer composed of HisG and HisZ subunits.

The protein resides in the cytoplasm. The catalysed reaction is 1-(5-phospho-beta-D-ribosyl)-ATP + diphosphate = 5-phospho-alpha-D-ribose 1-diphosphate + ATP. Its pathway is amino-acid biosynthesis; L-histidine biosynthesis; L-histidine from 5-phospho-alpha-D-ribose 1-diphosphate: step 1/9. In terms of biological role, catalyzes the condensation of ATP and 5-phosphoribose 1-diphosphate to form N'-(5'-phosphoribosyl)-ATP (PR-ATP). Has a crucial role in the pathway because the rate of histidine biosynthesis seems to be controlled primarily by regulation of HisG enzymatic activity. This chain is ATP phosphoribosyltransferase, found in Burkholderia multivorans (strain ATCC 17616 / 249).